The following is a 434-amino-acid chain: Glutamate-1-semialdehyde 2,1-aminomutase 1 (434 aa).

Lysine 270 is modified (N6-(pyridoxal phosphate)lysine).

The protein belongs to the class-III pyridoxal-phosphate-dependent aminotransferase family. HemL subfamily. In terms of assembly, homodimer. The cofactor is pyridoxal 5'-phosphate.

The protein resides in the cytoplasm. The catalysed reaction is (S)-4-amino-5-oxopentanoate = 5-aminolevulinate. It participates in porphyrin-containing compound metabolism; protoporphyrin-IX biosynthesis; 5-aminolevulinate from L-glutamyl-tRNA(Glu): step 2/2. This is Glutamate-1-semialdehyde 2,1-aminomutase 1 from Bacillus thuringiensis (strain Al Hakam).